We begin with the raw amino-acid sequence, 638 residues long: RAF proto-oncogene serine/threonine-protein kinase (638 aa).

Phosphoserine is present on Ser43. The RBD domain occupies 56 to 130; sequence STMRVYLPNK…VGAELQVDFL (75 aa). Residues 137–183 form a Phorbol-ester/DAG-type zinc finger; that stretch reads THNFVRKTFLKLAFCDICQKFLLNAFRCQTCGYKFHEHCSTKVPTMC. Zn(2+)-binding residues include His138, Cys151, Cys154, Cys164, Cys167, His172, Cys175, and Cys183. Ser257 bears the Phosphoserine mark. At Thr266 the chain carries Phosphothreonine; by autocatalysis. Positions 279–323 are disordered; that stretch reads LRSHSESGSPNNLSPTGWSNAKAPAPTHREKAASSTGQEKNKIRA. The segment covering 284–297 has biased composition (polar residues); sequence ESGSPNNLSPTGWS. Residue Ser329 is modified to Phosphoserine. Positions 340 to 600 constitute a Protein kinase domain; sequence VMLSSRIGSG…PQILSSIELL (261 aa). Residues 346-354 and Lys366 contribute to the ATP site; that span reads IGSGSFGTV. Asp459 functions as the Proton acceptor in the catalytic mechanism. Ser490 carries the phosphoserine modification.

The protein belongs to the protein kinase superfamily. TKL Ser/Thr protein kinase family. RAF subfamily. Zn(2+) serves as cofactor. Post-translationally, phosphorylation at Ser-257 inactivates kinase activity. Dephosphorylation of Ser-257 by a complex containing protein phosphatase 1 relieves inactivation, leading to stimulate RAF1 activity.

The protein localises to the cytoplasm. It localises to the cell membrane. The enzyme catalyses L-seryl-[protein] + ATP = O-phospho-L-seryl-[protein] + ADP + H(+). The catalysed reaction is L-threonyl-[protein] + ATP = O-phospho-L-threonyl-[protein] + ADP + H(+). Functionally, serine/threonine-protein kinase that acts as a regulatory link between the membrane-associated Ras GTPases and the MAPK/ERK cascade, and this critical regulatory link functions as a switch determining cell fate decisions. RAF1 activation initiates a mitogen-activated protein kinase (MAPK) cascade that comprises a sequential phosphorylation of the dual-specific MAPK kinases (MAP2K1/MEK1 and MAP2K2/MEK2) and the extracellular signal-regulated kinases (MAPK3/ERK1 and MAPK1/ERK2). In Xenopus laevis (African clawed frog), this protein is RAF proto-oncogene serine/threonine-protein kinase (raf1).